The sequence spans 363 residues: Alanine racemase (363 aa).

Residue Lys35 is the Proton acceptor; specific for D-alanine of the active site. An N6-(pyridoxal phosphate)lysine modification is found at Lys35. Position 134 (Arg134) interacts with substrate. Tyr259 (proton acceptor; specific for L-alanine) is an active-site residue. Met307 is a substrate binding site.

The protein belongs to the alanine racemase family. Pyridoxal 5'-phosphate is required as a cofactor.

It catalyses the reaction L-alanine = D-alanine. The protein operates within amino-acid biosynthesis; D-alanine biosynthesis; D-alanine from L-alanine: step 1/1. Its function is as follows. Catalyzes the interconversion of L-alanine and D-alanine. May also act on other amino acids. The protein is Alanine racemase (alr) of Shewanella denitrificans (strain OS217 / ATCC BAA-1090 / DSM 15013).